Reading from the N-terminus, the 253-residue chain is uncharacterized protein (253 aa).

The interval 211-241 (TTRRKRYREDRDSGEDLGAESKRGNGSVRYT) is disordered.

This is an uncharacterized protein from Ictalurid herpesvirus 1 (strain Auburn) (IcHV-1).